The chain runs to 194 residues: Kallikrein-like enzyme LV-Ka (194 aa).

Cystine bridges form between cysteine 7–cysteine 99, cysteine 44–cysteine 192, cysteine 78–cysteine 146, cysteine 110–cysteine 125, and cysteine 136–cysteine 161. Residues 36-185 (LNQEDKFICP…YTEWIQSIIA (150 aa)) enclose the Peptidase S1 domain. Serine 140 serves as the catalytic Charge relay system.

Belongs to the peptidase S1 family. Snake venom subfamily. Monomer. N-glycosylated. As to expression, expressed by the venom gland.

Its subcellular location is the secreted. With respect to regulation, completely inhibited by the serine protease inhibitors NPGB and PMSF, partially inhibited by benzamidines, and weakly or not inhibited by SBTI and EDTA. In terms of biological role, shows kallikrein-like activity, releasing bradykinin from kininogen. Also activates plasminogen, which is also a plasma kallikrein activity. Is active upon the kallikrein substrates S-2266 and S-2302, suggesting a preference for Arg in P1 position. In vivo, lowers blood pressure after intravenous injection in rat. In Lachesis muta muta (Bushmaster), this protein is Kallikrein-like enzyme LV-Ka.